The sequence spans 471 residues: 5-hydroxytryptamine receptor 2B (471 aa).

The Extracellular segment spans residues 1–26 (MFQAAVGPLQTNISLPEETPGLELNW). A glycan (N-linked (GlcNAc...) asparagine) is linked at asparagine 12. A helical transmembrane segment spans residues 27–49 (AALLIVMVIIPTIGGNILVILAV). Topologically, residues 50-60 (WLEKKLQNATN) are cytoplasmic. Residues 61-83 (FFLMSLAVADLLVGLLVMPIALI) traverse the membrane as a helical segment. The Extracellular segment spans residues 84–99 (TILYDSDWPLPEPLCP). Residues cysteine 98 and cysteine 182 are joined by a disulfide bond. Residues 100 to 121 (IWLFLDVLFSTASIMHLCAISL) form a helical membrane-spanning segment. Ergotamine-binding residues include aspartate 105 and threonine 110. The DRY motif; important for ligand-induced conformation changes motif lies at 122 to 124 (DRY). Residues 122 to 141 (DRYIAIKKPIQHSQYKSRAK) are Cytoplasmic-facing. A helical transmembrane segment spans residues 142 to 162 (VMLKIALVWLISICIAIPIPI). Residues 163-191 (KGLRNYPHPNNITFTSNHTCVLKTDTFQE) lie on the Extracellular side of the membrane. Residues asparagine 173 and asparagine 179 are each glycosylated (N-linked (GlcNAc...) asparagine). Leucine 184 contacts ergotamine. The [DE]RFG motif; may stabilize a conformation that preferentially activates signaling via beta-arrestin family members signature appears at 187–190 (DTFQ). Residues 192–214 (FIIFGSLVAFFIPLTIMMIIYFL) traverse the membrane as a helical segment. Over 215–308 (TVRVLRKKVY…TLTNEQRASK (94 aa)) the chain is Cytoplasmic. A helical membrane pass occupies residues 309 to 329 (VLGIVFLLFVVMWCPFFITNI). Residues 330–344 (TSALCGPCDANIIGR) lie on the Extracellular side of the membrane. Cysteine 334 and cysteine 337 form a disulfide bridge. Residues 345-366 (LMEIFSWVGYVSSGINPLVYTL) form a helical membrane-spanning segment. The NPxxY motif; important for ligand-induced conformation changes and signaling signature appears at 360–364 (NPLVY). Residues 367-471 (FNKTFRQAFT…CKQEERVSCV (105 aa)) are Cytoplasmic-facing. Cysteine 381 carries the S-palmitoyl cysteine lipid modification. The PDZ-binding motif lies at 469–471 (SCV).

It belongs to the G-protein coupled receptor 1 family. As to expression, detected in brain, heart and gut.

The protein localises to the cell membrane. It is found in the synapse. Its subcellular location is the synaptosome. G-protein coupled receptor for 5-hydroxytryptamine (serotonin). Also functions as a receptor for various ergot alkaloid derivatives and psychoactive substances. Ligand binding causes a conformation change that triggers signaling via guanine nucleotide-binding proteins (G proteins) and modulates the activity of downstream effectors. HTR2B is coupled to G(q)/G(11) G alpha proteins and activates phospholipase C-beta, releasing diacylglycerol (DAG) and inositol 1,4,5-trisphosphate (IP3) second messengers that modulate the activity of phosphatidylinositol 3-kinase and promote the release of Ca(2+) ions from intracellular stores, respectively. Beta-arrestin family members inhibit signaling via G proteins and mediate activation of alternative signaling pathways. Plays a role in the regulation of dopamine and 5-hydroxytryptamine release, 5-hydroxytryptamine uptake and in the regulation of extracellular dopamine and 5-hydroxytryptamine levels, and thereby affects neural activity. This chain is 5-hydroxytryptamine receptor 2B (htr2b), found in Dichotomyctere fluviatilis (Green pufferfish).